The chain runs to 243 residues: tRNA (guanine-N(1)-)-methyltransferase (243 aa).

Residues Gly-110 and 130–135 (VGDYVM) contribute to the S-adenosyl-L-methionine site.

It belongs to the RNA methyltransferase TrmD family. In terms of assembly, homodimer.

It is found in the cytoplasm. It carries out the reaction guanosine(37) in tRNA + S-adenosyl-L-methionine = N(1)-methylguanosine(37) in tRNA + S-adenosyl-L-homocysteine + H(+). Functionally, specifically methylates guanosine-37 in various tRNAs. The sequence is that of tRNA (guanine-N(1)-)-methyltransferase from Treponema denticola (strain ATCC 35405 / DSM 14222 / CIP 103919 / JCM 8153 / KCTC 15104).